The chain runs to 339 residues: RNA 3'-terminal phosphate cyclase (339 aa).

ATP-binding positions include glutamine 103 and 283 to 287 (HLADQ). The active-site Tele-AMP-histidine intermediate is the histidine 308.

This sequence belongs to the RNA 3'-terminal cyclase family. Type 1 subfamily.

It localises to the cytoplasm. It carries out the reaction a 3'-end 3'-phospho-ribonucleotide-RNA + ATP = a 3'-end 2',3'-cyclophospho-ribonucleotide-RNA + AMP + diphosphate. Its function is as follows. Catalyzes the conversion of 3'-phosphate to a 2',3'-cyclic phosphodiester at the end of RNA. The mechanism of action of the enzyme occurs in 3 steps: (A) adenylation of the enzyme by ATP; (B) transfer of adenylate to an RNA-N3'P to produce RNA-N3'PP5'A; (C) and attack of the adjacent 2'-hydroxyl on the 3'-phosphorus in the diester linkage to produce the cyclic end product. The biological role of this enzyme is unknown but it is likely to function in some aspects of cellular RNA processing. The protein is RNA 3'-terminal phosphate cyclase of Salmonella typhimurium (strain LT2 / SGSC1412 / ATCC 700720).